The primary structure comprises 1134 residues: Centrosomal protein of 131 kDa (1134 aa).

5 disordered regions span residues 111–131 (NSSESDYSLHKRTPDSSEEGE), 168–208 (DLPG…PLTL), 286–306 (ESSKQVEPTSPTPTLPKAPSS), 425–455 (VGKKKENVKPASADPIARSSKSKVTKSTINP), and 492–528 (DQKQYDGKHKPGLEDLDEAQDNDTASQLSLKSNEDSR). Residues 180–196 (MHADLDSSDCDNDKQEV) show a composition bias toward basic and acidic residues. Residues 494–504 (KQYDGKHKPGL) are compositionally biased toward basic and acidic residues. Residues 513–522 (NDTASQLSLK) show a composition bias toward polar residues. The stretch at 732–1131 (LESQNQAWEH…AVIRQQRKDY (400 aa)) forms a coiled coil.

It belongs to the CEP131 family. Expressed in chordotonal (Ch) neuronal precursors. Expressed in ciliated cells, like sensory neurons and spermatids.

It localises to the cytoplasm. It is found in the cytoskeleton. The protein resides in the microtubule organizing center. Its subcellular location is the centrosome. The protein localises to the cilium basal body. It localises to the centriole. Its function is as follows. Cilium-specific protein with a role in cilium/flagellum formation. May be involved in transport of components into the growing cilium. In germ cells and sensory neurons, plays a role with Cby in the building of the transition zone necessary for the formation of the ciliary cap and for the correct elongation of the axoneme. This Drosophila melanogaster (Fruit fly) protein is Centrosomal protein of 131 kDa.